The following is a 292-amino-acid chain: Large ribosomal subunit protein uL18 (292 aa).

This sequence belongs to the universal ribosomal protein uL18 family. In terms of assembly, component of the large ribosomal subunit (LSU).

Its subcellular location is the cytoplasm. The protein resides in the nucleus. Its function is as follows. Component of the ribosome, a large ribonucleoprotein complex responsible for the synthesis of proteins in the cell. The small ribosomal subunit (SSU) binds messenger RNAs (mRNAs) and translates the encoded message by selecting cognate aminoacyl-transfer RNA (tRNA) molecules. The large subunit (LSU) contains the ribosomal catalytic site termed the peptidyl transferase center (PTC), which catalyzes the formation of peptide bonds, thereby polymerizing the amino acids delivered by tRNAs into a polypeptide chain. The nascent polypeptides leave the ribosome through a tunnel in the LSU and interact with protein factors that function in enzymatic processing, targeting, and the membrane insertion of nascent chains at the exit of the ribosomal tunnel. This chain is Large ribosomal subunit protein uL18 (rpl5), found in Dictyostelium discoideum (Social amoeba).